A 187-amino-acid polypeptide reads, in one-letter code: Photosystem I assembly protein Ycf4 (187 aa).

Transmembrane regions (helical) follow at residues 21 to 43 (LSNYWWAITIGLGSSGFILAGIS) and 69 to 91 (LLYGTIGFLLDIYLWLLILWNVG).

The protein belongs to the Ycf4 family.

It is found in the plastid. Its subcellular location is the cyanelle thylakoid membrane. In terms of biological role, seems to be required for the assembly of the photosystem I complex. This Cyanophora paradoxa protein is Photosystem I assembly protein Ycf4.